The primary structure comprises 827 residues: Polyhomeotic-like protein 2 (827 aa).

Disordered stretches follow at residues 1–78, 282–316, and 482–545; these read MEKE…QYLQ, GLGAEPSPQGTAAKASPAETSSETTAKNDKTSDLT, and QEPT…PPQA. Over residues 9-38 the composition is skewed to low complexity; it reads SVASSASVTIPSTTSVSTSTSAGTLSNSSS. Positions 485 to 498 are enriched in basic and acidic residues; the sequence is TRTELRQSDKESQV. Over residues 517–538 the composition is skewed to polar residues; the sequence is AMTSGSGNNAPTVTGSAPQNGE. An HD1 motif is present at residues 540 to 570; the sequence is KPPPQAVVKPQILTHVIEGFVIQEGAEPFPV. An FCS-type zinc finger spans residues 609-643; the sequence is NNQPEPVRTCEFCGNVDFAFNFKRSKRFCSTVCAK. Zn(2+)-binding residues include cysteine 618, cysteine 621, cysteine 637, and cysteine 641. The segment at 653-730 is disordered; the sequence is MGLFPGKSSP…EPISPLSNSS (78 aa). Residues 661-675 show a composition bias toward basic and acidic residues; that stretch reads SPEDTKKPKASDESP. 2 stretches are compositionally biased toward polar residues: residues 687-696 and 708-717; these read PSIQTTTGAS and GESSQCSDMS. The SAM domain maps to 763–827; that stretch reads WNVEDVYEFI…FARISMLKDS (65 aa).

As to quaternary structure, component of a PRC1-like complex. As to expression, isoform 1 expression is stronger at the posterior border than in the anterior region within individual somites; On the contrary, isoform 2 expression is higher at the posterior border.

The protein resides in the nucleus. Its function is as follows. Component of a Polycomb group (PcG) multiprotein PRC1-like complex, a complex class required to maintain the transcriptionally repressive state of many genes, including Hox genes, throughout development. PcG PRC1 complex acts via chromatin remodeling and modification of histones; it mediates monoubiquitination of histone H2A 'Lys-119', rendering chromatin heritably changed in its expressibility. The sequence is that of Polyhomeotic-like protein 2 (phc2) from Danio rerio (Zebrafish).